A 389-amino-acid chain; its full sequence is S-adenosylmethionine synthase (389 aa).

H19 is a binding site for ATP. Position 21 (D21) interacts with Mg(2+). E47 serves as a coordination point for K(+). Positions 60 and 103 each coordinate L-methionine. Residues 103–113 (QSVDIAQGVSR) form a flexible loop region. Residues 168 to 170 (DGK), 234 to 235 (RF), D243, 249 to 250 (RK), A266, and K270 each bind ATP. Residue D243 participates in L-methionine binding. L-methionine is bound at residue K274.

It belongs to the AdoMet synthase family. In terms of assembly, homotetramer; dimer of dimers. Requires Mg(2+) as cofactor. It depends on K(+) as a cofactor.

It is found in the cytoplasm. The catalysed reaction is L-methionine + ATP + H2O = S-adenosyl-L-methionine + phosphate + diphosphate. It participates in amino-acid biosynthesis; S-adenosyl-L-methionine biosynthesis; S-adenosyl-L-methionine from L-methionine: step 1/1. Catalyzes the formation of S-adenosylmethionine (AdoMet) from methionine and ATP. The overall synthetic reaction is composed of two sequential steps, AdoMet formation and the subsequent tripolyphosphate hydrolysis which occurs prior to release of AdoMet from the enzyme. The polypeptide is S-adenosylmethionine synthase (Solidesulfovibrio magneticus (strain ATCC 700980 / DSM 13731 / RS-1) (Desulfovibrio magneticus)).